Reading from the N-terminus, the 141-residue chain is Large ribosomal subunit protein uL11 (141 aa).

It belongs to the universal ribosomal protein uL11 family. In terms of assembly, part of the ribosomal stalk of the 50S ribosomal subunit. Interacts with L10 and the large rRNA to form the base of the stalk. L10 forms an elongated spine to which L12 dimers bind in a sequential fashion forming a multimeric L10(L12)X complex. One or more lysine residues are methylated.

In terms of biological role, forms part of the ribosomal stalk which helps the ribosome interact with GTP-bound translation factors. This Fusobacterium nucleatum subsp. nucleatum (strain ATCC 25586 / DSM 15643 / BCRC 10681 / CIP 101130 / JCM 8532 / KCTC 2640 / LMG 13131 / VPI 4355) protein is Large ribosomal subunit protein uL11.